Consider the following 244-residue polypeptide: Myosin-7 (244 aa).

The rodlike tail (S2 and LMM domains) stretch occupies residues 1 to 244 (VEQTERSRKL…DIGTKGLNEE (244 aa)). Residues 1–244 (VEQTERSRKL…DIGTKGLNEE (244 aa)) are a coiled coil. The segment at 216–244 (EERADIAESQVNKLRAKSRDIGTKGLNEE) is disordered. Basic and acidic residues predominate over residues 232-244 (KSRDIGTKGLNEE).

Muscle myosin is a hexameric protein that consists of 2 heavy chain subunits (MHC), 2 alkali light chain subunits (MLC) and 2 regulatory light chain subunits (MLC-2). Interacts with ECPAS. Interacts (via C-terminus) with LRRC39.

The protein resides in the cytoplasm. The protein localises to the myofibril. Its subcellular location is the sarcomere. Its function is as follows. Myosins are actin-based motor molecules with ATPase activity essential for muscle contraction. Forms regular bipolar thick filaments that, together with actin thin filaments, constitute the fundamental contractile unit of skeletal and cardiac muscle. The chain is Myosin-7 (MYH7) from Papio hamadryas (Hamadryas baboon).